Consider the following 717-residue polypeptide: Mitotic spindle assembly checkpoint protein MAD1 (717 aa).

At M1 the chain carries N-acetylmethionine. S16 bears the Phosphoserine mark. Residues 46-631 (EQSMQLEERA…QTKIQEFRKV (586 aa)) are a coiled coil. Residue K61 is modified to N6-acetyllysine; alternate. K61 participates in a covalent cross-link: Glycyl lysine isopeptide (Lys-Gly) (interchain with G-Cter in SUMO2); alternate. The Nuclear localization signal signature appears at 79 to 82 (KRAR). A phosphoserine mark is found at S214 and S428. The interval 380–532 (LLEERKKREI…EMQMERLTLQ (153 aa)) is necessary for interaction with NEK2. A necessary for interaction with MAD2L1 region spans residues 540 to 551 (TKVLHMSLNPAS).

It belongs to the MAD1 family. Homodimer. Dimerizes via its N- and C- terminal regions. Heterodimerizes with MAD2L1 in order to form a tetrameric MAD1L1-MAD2L1 core complex. Interacts with the closed conformation form of MAD2L1 (C-MAD2) and open conformation form of MAD2L1 (O-MAD2). It is unclear whether MAD1L1 dimerization promotes the conversion of closed to open conformation of MAD2L1. Formation of a heterotetrameric core complex containing two molecules each of MAD1L1 and of MAD2L1 promotes binding of another molecule of MAD2L1 to each MAD2L1, resulting in a heterohexamer. Perturbation of the original MAD1L1-MAD2L1 structure by the spindle checkpoint may decrease MAD2L1 affinity for MAD1L1. CDC20 can compete with MAD1L1 for MAD2L1 binding, until the attachment and/or tension dampen the checkpoint signal, preventing further release of MAD2L1 on to CDC20. Also able to interact with the BUB1/BUB3 complex. Interacts with NEK2. Interacts with TTK. Interacts with TPR; the interactions occurs in a microtubule-independent manner. Interacts with IK. Interacts with the viral Tax protein. Interacts with PRAP1. Post-translationally, phosphorylated; by BUB1. Become hyperphosphorylated in late S through M phases or after mitotic spindle damage.

The protein localises to the nucleus. Its subcellular location is the chromosome. It localises to the centromere. It is found in the kinetochore. The protein resides in the nucleus envelope. The protein localises to the cytoplasm. Its subcellular location is the cytoskeleton. It localises to the microtubule organizing center. It is found in the centrosome. The protein resides in the spindle. The protein localises to the spindle pole. In terms of biological role, component of the spindle-assembly checkpoint that prevents the onset of anaphase until all chromosomes are properly aligned at the metaphase plate. Forms a heterotetrameric complex with the closed conformation form of MAD2L1 (C-MAD2) at unattached kinetochores during prometaphase, recruits an open conformation of MAD2L1 (O-MAD2) and promotes the conversion of O-MAD2 to C-MAD2, which ensures mitotic checkpoint signaling. This Cricetulus griseus (Chinese hamster) protein is Mitotic spindle assembly checkpoint protein MAD1 (MAD1L1).